Consider the following 323-residue polypeptide: Ethanolamine-phosphate cytidylyltransferase (323 aa).

It belongs to the cytidylyltransferase family.

The protein resides in the cytoplasm. It is found in the nucleus. It catalyses the reaction phosphoethanolamine + CTP + H(+) = CDP-ethanolamine + diphosphate. It functions in the pathway phospholipid metabolism; phosphatidylethanolamine biosynthesis; phosphatidylethanolamine from ethanolamine: step 2/3. Functionally, ethanolamine-phosphate cytidylyltransferase which catalyzes the second step of phosphatidylethanolamine biosynthesis. Involved in the maintenance of plasma membrane and required for proper sporulation. This Saccharomyces cerevisiae (strain ATCC 204508 / S288c) (Baker's yeast) protein is Ethanolamine-phosphate cytidylyltransferase.